The sequence spans 393 residues: tRNA(Met) cytidine acetate ligase (393 aa).

3 residues coordinate ATP: Gly-81, Asn-142, and Arg-167.

The protein belongs to the TmcAL family.

It localises to the cytoplasm. The enzyme catalyses cytidine(34) in elongator tRNA(Met) + acetate + ATP = N(4)-acetylcytidine(34) in elongator tRNA(Met) + AMP + diphosphate. Functionally, catalyzes the formation of N(4)-acetylcytidine (ac(4)C) at the wobble position of elongator tRNA(Met), using acetate and ATP as substrates. First activates an acetate ion to form acetyladenylate (Ac-AMP) and then transfers the acetyl group to tRNA to form ac(4)C34. This chain is tRNA(Met) cytidine acetate ligase, found in Bacillus thuringiensis (strain Al Hakam).